A 318-amino-acid chain; its full sequence is Probable dual-specificity RNA methyltransferase RlmN (318 aa).

Glu-63 functions as the Proton acceptor in the catalytic mechanism. The 231-residue stretch at 69 to 299 folds into the Radical SAM core domain; it reads HDYGRTVCVS…VSLRRELGAD (231 aa). A disulfide bridge links Cys-76 with Cys-304. Cys-83, Cys-87, and Cys-90 together coordinate [4Fe-4S] cluster. S-adenosyl-L-methionine is bound by residues 130–131, Ser-162, 185–187, and Asn-261; these read GE and SLH. Residue Cys-304 is the S-methylcysteine intermediate of the active site.

This sequence belongs to the radical SAM superfamily. RlmN family. [4Fe-4S] cluster serves as cofactor.

The protein resides in the cytoplasm. It carries out the reaction adenosine(2503) in 23S rRNA + 2 reduced [2Fe-2S]-[ferredoxin] + 2 S-adenosyl-L-methionine = 2-methyladenosine(2503) in 23S rRNA + 5'-deoxyadenosine + L-methionine + 2 oxidized [2Fe-2S]-[ferredoxin] + S-adenosyl-L-homocysteine. The catalysed reaction is adenosine(37) in tRNA + 2 reduced [2Fe-2S]-[ferredoxin] + 2 S-adenosyl-L-methionine = 2-methyladenosine(37) in tRNA + 5'-deoxyadenosine + L-methionine + 2 oxidized [2Fe-2S]-[ferredoxin] + S-adenosyl-L-homocysteine. Functionally, specifically methylates position 2 of adenine 2503 in 23S rRNA and position 2 of adenine 37 in tRNAs. This chain is Probable dual-specificity RNA methyltransferase RlmN, found in Desulforudis audaxviator (strain MP104C).